The following is a 338-amino-acid chain: Fe(3+)-binding periplasmic protein (338 aa).

An N-terminal signal peptide occupies residues 1–26 (MKLRISSLGPVALLASSMMLAFGAQA). Fe cation-binding residues include His40, Glu88, Tyr224, and Tyr225.

It belongs to the bacterial solute-binding protein 1 family. The complex is composed of two ATP-binding proteins (FbpC), two transmembrane proteins (FbpB) and a solute-binding protein (FbpA).

Its subcellular location is the periplasm. Its function is as follows. Part of the ABC transporter complex FbpABC (TC 3.A.1.10.1) involved in Fe(3+) ions import. This protein specifically binds Fe(3+) and is involved in its transmembrane transport. The chain is Fe(3+)-binding periplasmic protein (fbpA) from Serratia marcescens.